A 360-amino-acid polypeptide reads, in one-letter code: UPF0284 protein APE_2029.1 (360 aa).

This sequence belongs to the UPF0284 family.

This is UPF0284 protein APE_2029.1 from Aeropyrum pernix (strain ATCC 700893 / DSM 11879 / JCM 9820 / NBRC 100138 / K1).